Reading from the N-terminus, the 443-residue chain is Tubulin beta-2 chain (443 aa).

Positions 1–4 (MREI) match the MREI motif motif. GTP-binding residues include Gln11, Glu69, Ser138, Gly142, Thr143, Gly144, Asn204, and Asn226. A Mg(2+)-binding site is contributed by Glu69. Glu438 carries the post-translational modification 5-glutamyl polyglutamate.

It belongs to the tubulin family. In terms of assembly, dimer of alpha and beta chains. A typical microtubule is a hollow water-filled tube with an outer diameter of 25 nm and an inner diameter of 15 nM. Alpha-beta heterodimers associate head-to-tail to form protofilaments running lengthwise along the microtubule wall with the beta-tubulin subunit facing the microtubule plus end conferring a structural polarity. Microtubules usually have 13 protofilaments but different protofilament numbers can be found in some organisms and specialized cells. Mg(2+) serves as cofactor. Some glutamate residues at the C-terminus are polyglycylated, resulting in polyglycine chains on the gamma-carboxyl group. Glycylation is mainly limited to tubulin incorporated into axonemes (cilia and flagella) whereas glutamylation is prevalent in neuronal cells, centrioles, axonemes, and the mitotic spindle. Both modifications can coexist on the same protein on adjacent residues, and lowering polyglycylation levels increases polyglutamylation, and reciprocally. The precise function of polyglycylation is still unclear. In terms of processing, some glutamate residues at the C-terminus are polyglutamylated, resulting in polyglutamate chains on the gamma-carboxyl group. Polyglutamylation plays a key role in microtubule severing by spastin (SPAST). SPAST preferentially recognizes and acts on microtubules decorated with short polyglutamate tails: severing activity by SPAST increases as the number of glutamates per tubulin rises from one to eight, but decreases beyond this glutamylation threshold. As to expression, nervous system specific.

It is found in the cytoplasm. The protein localises to the cytoskeleton. Functionally, tubulin is the major constituent of microtubules, a cylinder consisting of laterally associated linear protofilaments composed of alpha- and beta-tubulin heterodimers. Microtubules grow by the addition of GTP-tubulin dimers to the microtubule end, where a stabilizing cap forms. Below the cap, tubulin dimers are in GDP-bound state, owing to GTPase activity of alpha-tubulin. This Xenopus laevis (African clawed frog) protein is Tubulin beta-2 chain (tubb2).